A 291-amino-acid polypeptide reads, in one-letter code: Phosphate-binding protein PstS 2 (291 aa).

An N-terminal signal peptide occupies residues 1–21 (MKFKKMLTLAAIGLSGFGLVA). Residue C22 is the site of N-palmitoyl cysteine attachment. Residue C22 is the site of S-diacylglycerol cysteine attachment.

This sequence belongs to the PstS family. The complex is composed of two ATP-binding proteins (PstB), two transmembrane proteins (PstC and PstA) and a solute-binding protein (PstS).

It localises to the cell membrane. In terms of biological role, part of the ABC transporter complex PstSACB involved in phosphate import. This chain is Phosphate-binding protein PstS 2 (pstS2), found in Streptococcus pneumoniae serotype 4 (strain ATCC BAA-334 / TIGR4).